A 47-amino-acid chain; its full sequence is Large ribosomal subunit protein bL33A (47 aa).

Belongs to the bacterial ribosomal protein bL33 family.

The chain is Large ribosomal subunit protein bL33A from Staphylococcus aureus (strain JH1).